Here is a 528-residue protein sequence, read N- to C-terminus: tRNA-2-methylthio-N(6)-dimethylallyladenosine synthase (528 aa).

One can recognise an MTTase N-terminal domain in the interval 19 to 134 (RTYEVRTYGC…LPTLLERARH (116 aa)). Cys-28, Cys-63, Cys-97, Cys-171, Cys-175, and Cys-178 together coordinate [4Fe-4S] cluster. The Radical SAM core domain maps to 157 to 387 (RDEIASGWVS…TALQERISHE (231 aa)). Residues 390–460 (QRVVGRTVEV…PFHLIADSVD (71 aa)) enclose the TRAM domain.

The protein belongs to the methylthiotransferase family. MiaB subfamily. Monomer. [4Fe-4S] cluster is required as a cofactor.

Its subcellular location is the cytoplasm. It carries out the reaction N(6)-dimethylallyladenosine(37) in tRNA + (sulfur carrier)-SH + AH2 + 2 S-adenosyl-L-methionine = 2-methylsulfanyl-N(6)-dimethylallyladenosine(37) in tRNA + (sulfur carrier)-H + 5'-deoxyadenosine + L-methionine + A + S-adenosyl-L-homocysteine + 2 H(+). Catalyzes the methylthiolation of N6-(dimethylallyl)adenosine (i(6)A), leading to the formation of 2-methylthio-N6-(dimethylallyl)adenosine (ms(2)i(6)A) at position 37 in tRNAs that read codons beginning with uridine. The protein is tRNA-2-methylthio-N(6)-dimethylallyladenosine synthase of Clavibacter michiganensis subsp. michiganensis (strain NCPPB 382).